The chain runs to 126 residues: Protein translocase subunit SecE (126 aa).

Helical transmembrane passes span 18-38 (LKWV…YLYG), 40-60 (LSVV…LGVA), and 97-117 (IVLA…GIMV).

This sequence belongs to the SecE/SEC61-gamma family. As to quaternary structure, component of the Sec protein translocase complex. Heterotrimer consisting of SecY, SecE and SecG subunits. The heterotrimers can form oligomers, although 1 heterotrimer is thought to be able to translocate proteins. Interacts with the ribosome. Interacts with SecDF, and other proteins may be involved. Interacts with SecA.

It localises to the cell inner membrane. Essential subunit of the Sec protein translocation channel SecYEG. Clamps together the 2 halves of SecY. May contact the channel plug during translocation. In Vibrio cholerae serotype O1 (strain ATCC 39315 / El Tor Inaba N16961), this protein is Protein translocase subunit SecE.